The following is a 120-amino-acid chain: Large ribosomal subunit protein uL29A (120 aa).

Phosphoserine is present on residues S13 and S50.

The protein belongs to the universal ribosomal protein uL29 family. In terms of assembly, component of the large ribosomal subunit (LSU). Mature yeast ribosomes consist of a small (40S) and a large (60S) subunit. The 40S small subunit contains 1 molecule of ribosomal RNA (18S rRNA) and 33 different proteins (encoded by 57 genes). The large 60S subunit contains 3 rRNA molecules (25S, 5.8S and 5S rRNA) and 46 different proteins (encoded by 81 genes). uL29 is associated with the polypeptide exit tunnel.

It localises to the cytoplasm. Its function is as follows. Component of the ribosome, a large ribonucleoprotein complex responsible for the synthesis of proteins in the cell. The small ribosomal subunit (SSU) binds messenger RNAs (mRNAs) and translates the encoded message by selecting cognate aminoacyl-transfer RNA (tRNA) molecules. The large subunit (LSU) contains the ribosomal catalytic site termed the peptidyl transferase center (PTC), which catalyzes the formation of peptide bonds, thereby polymerizing the amino acids delivered by tRNAs into a polypeptide chain. The nascent polypeptides leave the ribosome through a tunnel in the LSU and interact with protein factors that function in enzymatic processing, targeting, and the membrane insertion of nascent chains at the exit of the ribosomal tunnel. The polypeptide is Large ribosomal subunit protein uL29A (Saccharomyces cerevisiae (strain ATCC 204508 / S288c) (Baker's yeast)).